An 859-amino-acid chain; its full sequence is Altered inheritance of mitochondria protein 3 (859 aa).

5 disordered regions span residues 38–95, 137–290, 320–358, 372–624, and 638–859; these read SKTH…GTVI, TYPP…LQQT, QVQQ…YQQP, DYYQ…PKEE, and VDVG…HKSK. Low complexity-rich tracts occupy residues 137-146, 154-179, and 209-224; these read TYPPQNMYQQ, MQQQ…PMQQ, and QHVQ…QQFQ. The span at 225 to 237 shows a compositional bias: polar residues; the sequence is PSMGTPDQGQALV. 3 stretches are compositionally biased toward low complexity: residues 240 to 290, 333 to 358, and 372 to 400; these read SPLA…LQQT, QPQY…YQQP, and DYYQ…QQNP. The segment covering 412 to 437 has biased composition (polar residues); the sequence is PSLSNIQTSTGHGASQESTVSSTASI. Residues 447–457 are compositionally biased toward basic and acidic residues; that stretch reads SDERKEKKKIE. Residues 479-490 are compositionally biased toward low complexity; sequence SSSSLKSSSRDA. Polar residues predominate over residues 522-534; the sequence is PNTVTPAAATGTS. Residues 587 to 602 show a composition bias toward pro residues; that stretch reads PPNPPRPPVSSKPTLP. Composition is skewed to polar residues over residues 605–614 and 652–668; these read QTHQRITSTE and MVTS…SSRR. The span at 704 to 714 shows a compositional bias: low complexity; it reads ASNSSESAPPA. The segment covering 772–786 has biased composition (basic residues); the sequence is AHKKPPPKVPKKKVS. A compositionally biased stretch (polar residues) spans 814-825; it reads ARTSLTQETNNS. Residues 826–835 are compositionally biased toward acidic residues; sequence IDDDDDDDSG. Basic and acidic residues predominate over residues 848–859; that stretch reads VPAERDHIHKSK.

It belongs to the AIM3 family.

The protein resides in the membrane raft. This Kluyveromyces lactis (strain ATCC 8585 / CBS 2359 / DSM 70799 / NBRC 1267 / NRRL Y-1140 / WM37) (Yeast) protein is Altered inheritance of mitochondria protein 3 (AIM3).